The primary structure comprises 356 residues: ATP-dependent 6-phosphofructokinase (356 aa).

ATP-binding positions include Gly-15, 78–79 (KG), and 115–118 (GEGT). Position 116 (Glu-116) interacts with Mg(2+). Substrate is bound by residues 138–140 (TID), Arg-175, 182–184 (MGR), Glu-235, Arg-272, and 278–281 (HLQR). Asp-140 functions as the Proton acceptor in the catalytic mechanism.

This sequence belongs to the phosphofructokinase type A (PFKA) family. Mixed-substrate PFK group III subfamily. In terms of assembly, homodimer or homotetramer. Requires Mg(2+) as cofactor.

It is found in the cytoplasm. The enzyme catalyses beta-D-fructose 6-phosphate + ATP = beta-D-fructose 1,6-bisphosphate + ADP + H(+). The protein operates within carbohydrate degradation; glycolysis; D-glyceraldehyde 3-phosphate and glycerone phosphate from D-glucose: step 3/4. Catalyzes the phosphorylation of D-fructose 6-phosphate to fructose 1,6-bisphosphate by ATP, the first committing step of glycolysis. This chain is ATP-dependent 6-phosphofructokinase, found in Chloroflexus aggregans (strain MD-66 / DSM 9485).